The following is a 1019-amino-acid chain: Collagen alpha-1(VI) chain (1019 aa).

The signal sequence occupies residues 1-19 (MGLHDSFLALLLLLGGAWA). The region spanning 37–233 (DLFFVLDTSE…LDVEETINNI (197 aa)) is the VWFA 1 domain. The N-linked (GlcNAc...) asparagine glycan is linked to asparagine 212. The tract at residues 248-588 (FECHPPRGPP…GPPGPVGPPG (341 aa)) is disordered. The segment covering 253–262 (PRGPPGPPGD) has biased composition (pro residues). 2 stretches are compositionally biased toward basic and acidic residues: residues 299–332 (KGDKGSRGEKGSRGAKGAKGEKGKRGIDGIDGMK) and 370–380 (GKGEPGEDGKP). Low complexity predominate over residues 427 to 436 (ERGPPGSPGD). The Cell attachment site motif lies at 476–478 (RGD). The N-linked (GlcNAc...) asparagine glycan is linked to asparagine 514. Positions 529–531 (RGD) match the Cell attachment site motif. Asparagine 535 carries an N-linked (GlcNAc...) asparagine glycan. The span at 577–588 (RPGPPGPVGPPG) shows a compositional bias: pro residues. 2 VWFA domains span residues 613–800 (DLLF…LQNI) and 824–1012 (DIML…YQTV). 2 N-linked (GlcNAc...) asparagine glycosylation sites follow: asparagine 799 and asparagine 887.

It belongs to the type VI collagen family. As to quaternary structure, trimers composed of three different chains: alpha 1(VI), alpha 2(VI), and alpha 3(VI). In terms of processing, prolines at the third position of the tripeptide repeating unit (G-X-Y) are hydroxylated in some or all of the chains.

Its subcellular location is the secreted. The protein localises to the extracellular space. It is found in the extracellular matrix. Its function is as follows. Collagen VI acts as a cell-binding protein. In Gallus gallus (Chicken), this protein is Collagen alpha-1(VI) chain (COL6A1).